A 577-amino-acid chain; its full sequence is Arginine--tRNA ligase (577 aa).

The 'HIGH' region motif lies at 122 to 132 (PNVAKEMHVGH).

This sequence belongs to the class-I aminoacyl-tRNA synthetase family. As to quaternary structure, monomer.

It is found in the cytoplasm. The catalysed reaction is tRNA(Arg) + L-arginine + ATP = L-arginyl-tRNA(Arg) + AMP + diphosphate. This Vibrio vulnificus (strain YJ016) protein is Arginine--tRNA ligase.